The following is a 475-amino-acid chain: Squamosa promoter-binding-like protein 12 (475 aa).

Residues 49–73 are disordered; it reads NHGSTNSSGGTFTSSSELANGSSKS. Over residues 51–73 the composition is skewed to low complexity; that stretch reads GSTNSSGGTFTSSSELANGSSKS. The segment at 177–254 adopts an SBP-type zinc-finger fold; the sequence is SSYCQVEGCK…SDHNARRRKP (78 aa). Residues Cys-180, Cys-185, Cys-202, His-205, Cys-221, Cys-224, His-228, and Cys-240 each contribute to the Zn(2+) site. The Bipartite nuclear localization signal motif lies at 237–253; it reads KKSCRRRLSDHNARRRK. The interval 437–475 is disordered; it reads GGGGFWQDGDDPPPLDHASQAQAFMHPGNGSSSGYGHLH. Positions 465 to 475 are enriched in polar residues; sequence NGSSSGYGHLH.

Expressed in young panicles.

It localises to the nucleus. Functionally, trans-acting factor that binds specifically to the consensus nucleotide sequence 5'-TNCGTACAA-3'. May be involved in panicle development. The polypeptide is Squamosa promoter-binding-like protein 12 (SPL12) (Oryza sativa subsp. japonica (Rice)).